The chain runs to 213 residues: Holliday junction branch migration complex subunit RuvA (213 aa).

The domain I stretch occupies residues 1-63 (MIGMLTGRVA…EDAFKLYGFL (63 aa)). Residues 64 to 142 (DDIDRAWFVH…PTGRSFSIGL (79 aa)) form a domain II region. Residues 143–160 (PVHSDDGTTGGAPVAPAG) form a flexible linker region. The interval 161–213 (GDSLAREDAVSALVNLGYNESQARQAVAKILRDADSEAPLGDVIRLSLKELAA) is domain III.

It belongs to the RuvA family. As to quaternary structure, homotetramer. Forms an RuvA(8)-RuvB(12)-Holliday junction (HJ) complex. HJ DNA is sandwiched between 2 RuvA tetramers; dsDNA enters through RuvA and exits via RuvB. An RuvB hexamer assembles on each DNA strand where it exits the tetramer. Each RuvB hexamer is contacted by two RuvA subunits (via domain III) on 2 adjacent RuvB subunits; this complex drives branch migration. In the full resolvosome a probable DNA-RuvA(4)-RuvB(12)-RuvC(2) complex forms which resolves the HJ.

The protein localises to the cytoplasm. Functionally, the RuvA-RuvB-RuvC complex processes Holliday junction (HJ) DNA during genetic recombination and DNA repair, while the RuvA-RuvB complex plays an important role in the rescue of blocked DNA replication forks via replication fork reversal (RFR). RuvA specifically binds to HJ cruciform DNA, conferring on it an open structure. The RuvB hexamer acts as an ATP-dependent pump, pulling dsDNA into and through the RuvAB complex. HJ branch migration allows RuvC to scan DNA until it finds its consensus sequence, where it cleaves and resolves the cruciform DNA. The protein is Holliday junction branch migration complex subunit RuvA of Maricaulis maris (strain MCS10) (Caulobacter maris).